A 234-amino-acid chain; its full sequence is Sugar fermentation stimulation protein A (234 aa).

Positions 201 to 220 (LLTEAQQRGVEILAYKAEIS) form a DNA-binding region, H-T-H motif.

This sequence belongs to the SfsA family.

In terms of biological role, binds to DNA non-specifically. Could be a regulatory factor involved in maltose metabolism. This is Sugar fermentation stimulation protein A from Escherichia fergusonii (strain ATCC 35469 / DSM 13698 / CCUG 18766 / IAM 14443 / JCM 21226 / LMG 7866 / NBRC 102419 / NCTC 12128 / CDC 0568-73).